Here is a 483-residue protein sequence, read N- to C-terminus: UDP-N-acetylmuramoyl-L-alanyl-D-glutamate--2,6-diaminopimelate ligase 2 (483 aa).

Serine 30 contributes to the UDP-N-acetyl-alpha-D-muramoyl-L-alanyl-D-glutamate binding site. Residue 111–117 (GTNGKTT) coordinates ATP. UDP-N-acetyl-alpha-D-muramoyl-L-alanyl-D-glutamate is bound by residues 156–157 (TT), threonine 183, and arginine 191. Lysine 223 is subject to N6-carboxylysine. Meso-2,6-diaminopimelate is bound by residues arginine 380, 404-407 (DNPR), glycine 456, and glutamate 460. The short motif at 404–407 (DNPR) is the Meso-diaminopimelate recognition motif element.

This sequence belongs to the MurCDEF family. MurE subfamily. It depends on Mg(2+) as a cofactor. In terms of processing, carboxylation is probably crucial for Mg(2+) binding and, consequently, for the gamma-phosphate positioning of ATP.

It is found in the cytoplasm. The catalysed reaction is UDP-N-acetyl-alpha-D-muramoyl-L-alanyl-D-glutamate + meso-2,6-diaminopimelate + ATP = UDP-N-acetyl-alpha-D-muramoyl-L-alanyl-gamma-D-glutamyl-meso-2,6-diaminopimelate + ADP + phosphate + H(+). It participates in cell wall biogenesis; peptidoglycan biosynthesis. Catalyzes the addition of meso-diaminopimelic acid to the nucleotide precursor UDP-N-acetylmuramoyl-L-alanyl-D-glutamate (UMAG) in the biosynthesis of bacterial cell-wall peptidoglycan. The polypeptide is UDP-N-acetylmuramoyl-L-alanyl-D-glutamate--2,6-diaminopimelate ligase 2 (Clostridium acetobutylicum (strain ATCC 824 / DSM 792 / JCM 1419 / IAM 19013 / LMG 5710 / NBRC 13948 / NRRL B-527 / VKM B-1787 / 2291 / W)).